A 700-amino-acid chain; its full sequence is Polyribonucleotide nucleotidyltransferase (700 aa).

Residues Asp484 and Asp490 each contribute to the Mg(2+) site. Residues Pro551–Ile610 enclose the KH domain. The 69-residue stretch at Gly620 to Lys688 folds into the S1 motif domain.

The protein belongs to the polyribonucleotide nucleotidyltransferase family. The cofactor is Mg(2+).

It localises to the cytoplasm. It catalyses the reaction RNA(n+1) + phosphate = RNA(n) + a ribonucleoside 5'-diphosphate. Functionally, involved in mRNA degradation. Catalyzes the phosphorolysis of single-stranded polyribonucleotides processively in the 3'- to 5'-direction. This chain is Polyribonucleotide nucleotidyltransferase, found in Thermoanaerobacter sp. (strain X514).